The following is a 98-amino-acid chain: Integration host factor subunit alpha (98 aa).

Residues 52-71 (FDLRDKNQRPGRNPKTGEDI) form a disordered region.

The protein belongs to the bacterial histone-like protein family. In terms of assembly, heterodimer of an alpha and a beta chain.

In terms of biological role, this protein is one of the two subunits of integration host factor, a specific DNA-binding protein that functions in genetic recombination as well as in transcriptional and translational control. This Photorhabdus laumondii subsp. laumondii (strain DSM 15139 / CIP 105565 / TT01) (Photorhabdus luminescens subsp. laumondii) protein is Integration host factor subunit alpha.